Here is a 347-residue protein sequence, read N- to C-terminus: Large ribosomal subunit protein uL10 (347 aa).

Residues 310–347 form a disordered region; the sequence is ATVAAPAAEEEKKEEEPEEEEEDHAEEDGMAGLGALFG. Residues 325-338 show a composition bias toward acidic residues; that stretch reads EPEEEEEDHAEEDG.

It belongs to the universal ribosomal protein uL10 family. In terms of assembly, part of the 50S ribosomal subunit. Forms part of the ribosomal stalk which helps the ribosome interact with GTP-bound translation factors. Forms a heptameric L10(L12)2(L12)2(L12)2 complex, where L10 forms an elongated spine to which the L12 dimers bind in a sequential fashion.

Forms part of the ribosomal stalk, playing a central role in the interaction of the ribosome with GTP-bound translation factors. This is Large ribosomal subunit protein uL10 from Methanosarcina mazei (strain ATCC BAA-159 / DSM 3647 / Goe1 / Go1 / JCM 11833 / OCM 88) (Methanosarcina frisia).